The sequence spans 956 residues: Glutamate receptor ionotropic, kainate 4 (956 aa).

An N-terminal signal peptide occupies residues 1 to 20 (MPRVSAPLVLLPAWLVMVAC). At 21–545 (SPHSLRIAAI…YFSFLDPFSP (525 aa)) the chain is on the extracellular side. 8 N-linked (GlcNAc...) asparagine glycosylation sites follow: asparagine 158, asparagine 220, asparagine 272, asparagine 286, asparagine 323, asparagine 408, asparagine 415, and asparagine 479. Glycine 500, threonine 502, and arginine 507 together coordinate L-glutamate. A helical membrane pass occupies residues 546–566 (GVWLFMLLAYLAVSCVLFLVA). The Cytoplasmic portion of the chain corresponds to 567–623 (RLTPYEWYSPHPCAQGRCNLLVNQYSLGNSLWFPVGGFMQQGSTIAPRALSTRCVSG). The helical transmembrane segment at 624-644 (VWWAFTLIIISSYTANLAAFL) threads the bilayer. Residues 645–804 (TVQRMDVPIE…HRAKGLGMEN (160 aa)) are Extracellular-facing. L-glutamate contacts are provided by serine 674, serine 675, and glutamate 723. The N-linked (GlcNAc...) asparagine glycan is linked to asparagine 736. Residues 805 to 825 (IGGIFVVLICGLIVAIFMAML) traverse the membrane as a helical segment. Residues 826–956 (EFLWTLRHSE…EKTTNSSEPE (131 aa)) lie on the Cytoplasmic side of the membrane. Disordered regions lie at residues 863 to 889 (RRRAAVPPPRPPIPEERRPRGTATLSN) and 931 to 956 (LRARPSPARSEESLEWEKTTNSSEPE). Positions 939–948 (RSEESLEWEK) are enriched in basic and acidic residues.

This sequence belongs to the glutamate-gated ion channel (TC 1.A.10.1) family. GRIK4 subfamily. As to quaternary structure, homodimer. Can form functional heteromeric receptors with GRIK1, GRIK2 and GRIK3.

It localises to the cell membrane. Its subcellular location is the postsynaptic cell membrane. The protein localises to the presynaptic cell membrane. Its function is as follows. Ionotropic glutamate receptor that functions as a cation-permeable ligand-gated ion channel. Cannot form functional channels on its own. Shows channel activity only in heteromeric assembly with GRIK1, GRIK2 and GRIK3 subunits. This Homo sapiens (Human) protein is Glutamate receptor ionotropic, kainate 4 (GRIK4).